The primary structure comprises 184 residues: ATP synthase subunit b, chloroplastic (184 aa).

Residues 27–49 traverse the membrane as a helical segment; the sequence is LATNLINLSVVLGVLIFFGKGVL.

It belongs to the ATPase B chain family. F-type ATPases have 2 components, F(1) - the catalytic core - and F(0) - the membrane proton channel. F(1) has five subunits: alpha(3), beta(3), gamma(1), delta(1), epsilon(1). F(0) has four main subunits: a(1), b(1), b'(1) and c(10-14). The alpha and beta chains form an alternating ring which encloses part of the gamma chain. F(1) is attached to F(0) by a central stalk formed by the gamma and epsilon chains, while a peripheral stalk is formed by the delta, b and b' chains.

It is found in the plastid. It localises to the chloroplast thylakoid membrane. F(1)F(0) ATP synthase produces ATP from ADP in the presence of a proton or sodium gradient. F-type ATPases consist of two structural domains, F(1) containing the extramembraneous catalytic core and F(0) containing the membrane proton channel, linked together by a central stalk and a peripheral stalk. During catalysis, ATP synthesis in the catalytic domain of F(1) is coupled via a rotary mechanism of the central stalk subunits to proton translocation. In terms of biological role, component of the F(0) channel, it forms part of the peripheral stalk, linking F(1) to F(0). The sequence is that of ATP synthase subunit b, chloroplastic from Nymphaea alba (White water-lily).